The sequence spans 305 residues: Putative lipid kinase SAS0691 (305 aa).

The region spanning 3-139 is the DAGKc domain; it reads NKYTHGVLFY…YDVIKINNQY (137 aa). Residues Ser-44, 74–80, and Thr-101 contribute to the ATP site; that span reads GDGTVNE. Ser-220, Asp-223, and Glu-225 together coordinate Mg(2+). Glu-281 (proton acceptor) is an active-site residue.

It belongs to the diacylglycerol/lipid kinase family. Requires Mg(2+) as cofactor.

Functionally, may catalyze the ATP-dependent phosphorylation of lipids other than diacylglycerol (DAG). This is Putative lipid kinase SAS0691 from Staphylococcus aureus (strain MSSA476).